The following is a 400-amino-acid chain: MGLFKVIFTAVAALSAVDAAELLSSAKSKDIIPNSYLVVMKDSVSSAELDSHVSWVTDLHREGVAKRGAENLGGFKHSYKINGWHAYSGSFDSETLASILDNDKVDFVEHDRHVYISGFVTQKDAPSWGLGRVSHRMNGTRDYVYDESAGSGITFYGVDTGIDIHHPDFGGRAVWGINVVNDTKDNDRHGHGTHTAATAAGTKYGLAKKANVVAVKALNDYGAGLWSNIMKALEWCVNDAREKKILGKAVLNLSISGGKVVAANQAITNAAKAGIFVSVAAGNDNQDATNKSPASAENVCCAAATTIRDDKAKFSNYGSVVKLYAPGQGITSATPNNQTGVMSGTSMAAPHVGGVGATLMASKGIAPAAVCAELIKMASGPVLNPGANTTNKLLYNRSGK.

An N-terminal signal peptide occupies residues methionine 1–alanine 19. Residues alanine 20 to serine 117 constitute a propeptide that is removed on maturation. The Inhibitor I9 domain occupies serine 35 to isoleucine 116. A Peptidase S8 domain is found at serine 127–lysine 400. Asparagine 138 carries an N-linked (GlcNAc...) asparagine glycan. Catalysis depends on aspartate 159, which acts as the Charge relay system. A glycan (N-linked (GlcNAc...) asparagine) is linked at asparagine 181. Histidine 191 serves as the catalytic Charge relay system. N-linked (GlcNAc...) asparagine glycans are attached at residues asparagine 252 and asparagine 337. Serine 346 serves as the catalytic Charge relay system. Residues asparagine 388 and asparagine 396 are each glycosylated (N-linked (GlcNAc...) asparagine).

It belongs to the peptidase S8 family.

The protein localises to the secreted. In terms of biological role, secreted subtilisin-like serine protease with keratinolytic activity that contributes to pathogenicity. The protein is Subtilisin-like protease 11 (SUB11) of Trichophyton verrucosum (strain HKI 0517).